The sequence spans 571 residues: Urease subunit alpha (571 aa).

In terms of domain architecture, Urease spans 132–571; that stretch reads GGIDAHIHFI…VALAQRYFLF (440 aa). 3 residues coordinate Ni(2+): His137, His139, and Lys220. Residue Lys220 is modified to N6-carboxylysine. His222 contributes to the substrate binding site. Ni(2+) is bound by residues His249 and His275. Residue His323 is the Proton donor of the active site. Asp363 contacts Ni(2+).

This sequence belongs to the metallo-dependent hydrolases superfamily. Urease alpha subunit family. Heterotrimer of UreA (gamma), UreB (beta) and UreC (alpha) subunits. Three heterotrimers associate to form the active enzyme. Ni cation serves as cofactor. In terms of processing, carboxylation allows a single lysine to coordinate two nickel ions.

The protein resides in the cytoplasm. It catalyses the reaction urea + 2 H2O + H(+) = hydrogencarbonate + 2 NH4(+). It functions in the pathway nitrogen metabolism; urea degradation; CO(2) and NH(3) from urea (urease route): step 1/1. The sequence is that of Urease subunit alpha from Halalkalibacterium halodurans (strain ATCC BAA-125 / DSM 18197 / FERM 7344 / JCM 9153 / C-125) (Bacillus halodurans).